The following is an 82-amino-acid chain: Sec-independent protein translocase protein TatA (82 aa).

The helical transmembrane segment at 1–21 threads the bilayer; the sequence is MGIFDWKHWIVILIVVVLVFG. Positions 43 to 82 are disordered; sequence VNTEEDDKKEQPAAQPAQPLNQPHTIDAQAQKVEEPARKD.

Belongs to the TatA/E family. The Tat system comprises two distinct complexes: a TatABC complex, containing multiple copies of TatA, TatB and TatC subunits, and a separate TatA complex, containing only TatA subunits. Substrates initially bind to the TatABC complex, which probably triggers association of the separate TatA complex to form the active translocon.

It is found in the cell inner membrane. Functionally, part of the twin-arginine translocation (Tat) system that transports large folded proteins containing a characteristic twin-arginine motif in their signal peptide across membranes. TatA could form the protein-conducting channel of the Tat system. This Pseudomonas paraeruginosa (strain DSM 24068 / PA7) (Pseudomonas aeruginosa (strain PA7)) protein is Sec-independent protein translocase protein TatA.